The chain runs to 473 residues: Photosystem II CP43 reaction center protein (473 aa).

The propeptide occupies 1–14; sequence MKTLYSLRRFYHVE. T15 carries the post-translational modification N-acetylthreonine. Phosphothreonine is present on T15. The next 5 helical transmembrane spans lie at 69-93, 134-155, 178-200, 255-275, and 291-312; these read LFEV…PHLA, LLGP…KDRN, KAFY…RKIT, KPFA…LSYS, and WFNN…ASQA. A [CaMn4O5] cluster-binding site is contributed by E367. A helical membrane pass occupies residues 447–471; the sequence is RARAAAAGFEKGIDRDFEPVLSMTP.

Belongs to the PsbB/PsbC family. PsbC subfamily. As to quaternary structure, PSII is composed of 1 copy each of membrane proteins PsbA, PsbB, PsbC, PsbD, PsbE, PsbF, PsbH, PsbI, PsbJ, PsbK, PsbL, PsbM, PsbT, PsbX, PsbY, PsbZ, Psb30/Ycf12, at least 3 peripheral proteins of the oxygen-evolving complex and a large number of cofactors. It forms dimeric complexes. Binds multiple chlorophylls and provides some of the ligands for the Ca-4Mn-5O cluster of the oxygen-evolving complex. It may also provide a ligand for a Cl- that is required for oxygen evolution. PSII binds additional chlorophylls, carotenoids and specific lipids. serves as cofactor.

It is found in the plastid. Its subcellular location is the chloroplast thylakoid membrane. In terms of biological role, one of the components of the core complex of photosystem II (PSII). It binds chlorophyll and helps catalyze the primary light-induced photochemical processes of PSII. PSII is a light-driven water:plastoquinone oxidoreductase, using light energy to abstract electrons from H(2)O, generating O(2) and a proton gradient subsequently used for ATP formation. This Pisum sativum (Garden pea) protein is Photosystem II CP43 reaction center protein.